Reading from the N-terminus, the 399-residue chain is Phosphoglycerate kinase (399 aa).

Residues 21–23 (DFN), Arg36, 59–62 (HLGR), Arg120, and Arg158 each bind substrate. ATP contacts are provided by residues Lys209, Gly297, Glu328, and 355–358 (GGDS).

This sequence belongs to the phosphoglycerate kinase family. As to quaternary structure, monomer.

Its subcellular location is the cytoplasm. The enzyme catalyses (2R)-3-phosphoglycerate + ATP = (2R)-3-phospho-glyceroyl phosphate + ADP. The protein operates within carbohydrate degradation; glycolysis; pyruvate from D-glyceraldehyde 3-phosphate: step 2/5. This is Phosphoglycerate kinase from Streptococcus suis (strain 05ZYH33).